Consider the following 299-residue polypeptide: UDP-N-acetylenolpyruvoylglucosamine reductase (299 aa).

Residues 21–189 enclose the FAD-binding PCMH-type domain; it reads RVGGPAQWLL…LSARFRLEPG (169 aa). R168 is an active-site residue. S219 (proton donor) is an active-site residue. E289 is a catalytic residue.

It belongs to the MurB family. FAD is required as a cofactor.

The protein resides in the cytoplasm. It catalyses the reaction UDP-N-acetyl-alpha-D-muramate + NADP(+) = UDP-N-acetyl-3-O-(1-carboxyvinyl)-alpha-D-glucosamine + NADPH + H(+). It functions in the pathway cell wall biogenesis; peptidoglycan biosynthesis. Its function is as follows. Cell wall formation. In Parasynechococcus marenigrum (strain WH8102), this protein is UDP-N-acetylenolpyruvoylglucosamine reductase.